We begin with the raw amino-acid sequence, 388 residues long: Succinate--CoA ligase [ADP-forming] subunit beta (388 aa).

ATP-binding positions include Lys46, 53-55 (GRG), Glu99, Cys102, and Glu107. Residues Asn199 and Asp213 each contribute to the Mg(2+) site. Substrate is bound by residues Asn264 and 321–323 (GIV).

The protein belongs to the succinate/malate CoA ligase beta subunit family. Heterotetramer of two alpha and two beta subunits. The cofactor is Mg(2+).

The enzyme catalyses succinate + ATP + CoA = succinyl-CoA + ADP + phosphate. It catalyses the reaction GTP + succinate + CoA = succinyl-CoA + GDP + phosphate. It functions in the pathway carbohydrate metabolism; tricarboxylic acid cycle; succinate from succinyl-CoA (ligase route): step 1/1. In terms of biological role, succinyl-CoA synthetase functions in the citric acid cycle (TCA), coupling the hydrolysis of succinyl-CoA to the synthesis of either ATP or GTP and thus represents the only step of substrate-level phosphorylation in the TCA. The beta subunit provides nucleotide specificity of the enzyme and binds the substrate succinate, while the binding sites for coenzyme A and phosphate are found in the alpha subunit. This Actinobacillus pleuropneumoniae serotype 5b (strain L20) protein is Succinate--CoA ligase [ADP-forming] subunit beta.